Reading from the N-terminus, the 191-residue chain is Fe/S biogenesis protein NfuA (191 aa).

Residues cysteine 149 and cysteine 152 each contribute to the [4Fe-4S] cluster site.

The protein belongs to the NfuA family. Homodimer. [4Fe-4S] cluster serves as cofactor.

Functionally, involved in iron-sulfur cluster biogenesis. Binds a 4Fe-4S cluster, can transfer this cluster to apoproteins, and thereby intervenes in the maturation of Fe/S proteins. Could also act as a scaffold/chaperone for damaged Fe/S proteins. This Edwardsiella ictaluri (strain 93-146) protein is Fe/S biogenesis protein NfuA.